Reading from the N-terminus, the 248-residue chain is 4-hydroxy-tetrahydrodipicolinate reductase (248 aa).

Residues 8-13, 75-77, and 99-102 each bind NAD(+); these read GAKGRM, GTT, and ATNM. His-131 (proton donor/acceptor) is an active-site residue. His-132 serves as a coordination point for (S)-2,3,4,5-tetrahydrodipicolinate. The active-site Proton donor is Lys-135. 141–142 is a binding site for (S)-2,3,4,5-tetrahydrodipicolinate; it reads GT.

The protein belongs to the DapB family.

It localises to the cytoplasm. The enzyme catalyses (S)-2,3,4,5-tetrahydrodipicolinate + NAD(+) + H2O = (2S,4S)-4-hydroxy-2,3,4,5-tetrahydrodipicolinate + NADH + H(+). It carries out the reaction (S)-2,3,4,5-tetrahydrodipicolinate + NADP(+) + H2O = (2S,4S)-4-hydroxy-2,3,4,5-tetrahydrodipicolinate + NADPH + H(+). Its pathway is amino-acid biosynthesis; L-lysine biosynthesis via DAP pathway; (S)-tetrahydrodipicolinate from L-aspartate: step 4/4. Functionally, catalyzes the conversion of 4-hydroxy-tetrahydrodipicolinate (HTPA) to tetrahydrodipicolinate. This chain is 4-hydroxy-tetrahydrodipicolinate reductase, found in Campylobacter jejuni subsp. doylei (strain ATCC BAA-1458 / RM4099 / 269.97).